The following is a 369-amino-acid chain: Glutamate 5-kinase (369 aa).

Lys-9 contacts ATP. Positions 49, 136, and 148 each coordinate substrate. ATP is bound by residues 168–169 and 210–216; these read TD and TGGMLTK. The PUA domain occupies 275 to 355; it reads RGSVYVDEGA…KGVFIHRDDW (81 aa).

It belongs to the glutamate 5-kinase family.

Its subcellular location is the cytoplasm. It carries out the reaction L-glutamate + ATP = L-glutamyl 5-phosphate + ADP. It participates in amino-acid biosynthesis; L-proline biosynthesis; L-glutamate 5-semialdehyde from L-glutamate: step 1/2. Functionally, catalyzes the transfer of a phosphate group to glutamate to form L-glutamate 5-phosphate. The polypeptide is Glutamate 5-kinase (Neisseria meningitidis serogroup B (strain ATCC BAA-335 / MC58)).